Here is a 312-residue protein sequence, read N- to C-terminus: tRNA dimethylallyltransferase (312 aa).

11–18 provides a ligand contact to ATP; that stretch reads GATATGKT. Substrate is bound at residue 13–18; it reads TATGKT. Positions 36–39 are interaction with substrate tRNA; sequence DSRQ.

This sequence belongs to the IPP transferase family. As to quaternary structure, monomer. It depends on Mg(2+) as a cofactor.

The catalysed reaction is adenosine(37) in tRNA + dimethylallyl diphosphate = N(6)-dimethylallyladenosine(37) in tRNA + diphosphate. Functionally, catalyzes the transfer of a dimethylallyl group onto the adenine at position 37 in tRNAs that read codons beginning with uridine, leading to the formation of N6-(dimethylallyl)adenosine (i(6)A). The chain is tRNA dimethylallyltransferase from Thermosynechococcus vestitus (strain NIES-2133 / IAM M-273 / BP-1).